A 263-amino-acid polypeptide reads, in one-letter code: Acyl-[acyl-carrier-protein]--UDP-N-acetylglucosamine O-acyltransferase (263 aa).

Belongs to the transferase hexapeptide repeat family. LpxA subfamily. In terms of assembly, homotrimer.

It is found in the cytoplasm. It catalyses the reaction a (3R)-hydroxyacyl-[ACP] + UDP-N-acetyl-alpha-D-glucosamine = a UDP-3-O-[(3R)-3-hydroxyacyl]-N-acetyl-alpha-D-glucosamine + holo-[ACP]. It participates in glycolipid biosynthesis; lipid IV(A) biosynthesis; lipid IV(A) from (3R)-3-hydroxytetradecanoyl-[acyl-carrier-protein] and UDP-N-acetyl-alpha-D-glucosamine: step 1/6. In terms of biological role, involved in the biosynthesis of lipid A, a phosphorylated glycolipid that anchors the lipopolysaccharide to the outer membrane of the cell. The polypeptide is Acyl-[acyl-carrier-protein]--UDP-N-acetylglucosamine O-acyltransferase (Stenotrophomonas maltophilia (strain R551-3)).